A 251-amino-acid chain; its full sequence is Small ribosomal subunit protein uS2 (251 aa).

The protein belongs to the universal ribosomal protein uS2 family.

The polypeptide is Small ribosomal subunit protein uS2 (Synechococcus sp. (strain ATCC 27144 / PCC 6301 / SAUG 1402/1) (Anacystis nidulans)).